The sequence spans 781 residues: Pyrin (781 aa).

Residues 1-92 (MAKTPSDHLL…AEELHRAAIQ (92 aa)) enclose the Pyrin domain. Polar residues predominate over residues 93-111 (EYSTQENGTDDSAASSSLG). A disordered region spans residues 93–226 (EYSTQENGTD…AGGAPGQKEC (134 aa)). Basic and acidic residues predominate over residues 113–126 (NKPRSLKTPDHPEG). Residues 153-163 (LSRKPLSKRRE) show a composition bias toward basic residues. Ser242 is modified (phosphoserine). The interval 266–280 (KTAANLDSATEPRAR) is interaction with RELA. Disordered regions lie at residues 270-322 (NLDS…EGDP) and 336-373 (EAVSGHPQASGSRSPGCPRCQDSHERKSPGSLSPQPLP). A B box-type zinc finger spans residues 370–412 (QPLPQCKRHLKQVQLLFCEDHDEPICLICSLSQEHQGHRVRPI). Residues 413–442 (EEVALEHKKKIQKQLEHLKKLRKSGEEQRS) adopt a coiled-coil conformation. The Nuclear localization signal motif lies at 420–437 (KKKIQKQLEHLKKLRKSG). The interval 420 to 582 (KKKIQKQLEH…YFSETLRSEM (163 aa)) is required for homotrimerization and induction of pyroptosomes. One can recognise a B30.2/SPRY domain in the interval 580 to 775 (SEMEMFNVPE…NTAPLTICPV (196 aa)).

In terms of assembly, homotrimer. Interacts (via the B box-type zinc finger) with PSTPIP1. Interacts (via the B30.2/SPRY domain) with several components of the inflammasome complex, including CASP1 p20 and p10 subunits, CASP5, PYCARD, NLRP1, NLRP2 and NLRP3, as well as with unprocessed IL1B; this interaction may lead to autophagic degradation of these proteins. Component of the AIM2 PANoptosome complex, a multiprotein complex that drives inflammatory cell death (PANoptosis). Interacts with NFKBIA and RELA. Interacts weakly with VASP and ACTR3. Interacts with active ULK1 (phosphorylated on 'Ser-317') and BECN1 simultaneously. Also interacts with ATG16L1 (via WD repeats), and with ATG8 family members, including GABARAP, GABARAPL1 and, to a lesser extent, GABARAPL2, MAP1LC3A/LC3A and MAP1LC3C/LC3C. Interacts with TRIM21. Interacts with YWHAB, YWHAE, YWHAG, YWHAH, YWHAQ and YWHAZ; the interaction is required for the down-regulation of pyrin pro-inflammatory activity. Cleaved by CASP1. The N-terminal cleavage product localizes to the nucleus as a filamentous network and to the cytoplasm, interacts more strongly with RELA and NFKBIA than the full-length protein, enhances the nuclear localization of RELA and induces NFKBIA proteolysis. The C-terminal cleavage product localizes to the cytoplasm. Post-translationally, phosphorylation at Ser-242 is required for the interaction with 14-3-3 proteins and down-regulation of pyrin pro-inflammatory activity. In terms of processing, degraded along with the delivery of its substrates to autolysosomal compartments (at protein level). In terms of tissue distribution, expressed in peripheral blood leukocytes, particularly in mature granulocytes and to a lesser extent in monocytes but not in lymphocytes. Detected in spleen, lung and muscle, probably as a result of leukocyte infiltration in these tissues. Not expressed in thymus, prostate, testis, ovary, small intestine, colon, heart, brain, placenta, liver, kidney, pancreas. Expression detected in several myeloid leukemic, colon cancer, and prostate cancer cell lines.

It localises to the cytoplasm. The protein resides in the cytoskeleton. The protein localises to the cell projection. Its subcellular location is the ruffle. It is found in the lamellipodium. It localises to the nucleus. The protein resides in the cytoplasmic vesicle. The protein localises to the autophagosome. In terms of biological role, involved in the regulation of innate immunity and the inflammatory response in response to IFNG/IFN-gamma. Organizes autophagic machinery by serving as a platform for the assembly of ULK1, Beclin 1/BECN1, ATG16L1, and ATG8 family members and recognizes specific autophagy targets, thus coordinating target recognition with assembly of the autophagic apparatus and initiation of autophagy. Acts as an autophagy receptor for the degradation of several inflammasome components, including CASP1, NLRP1 and NLRP3, hence preventing excessive IL1B- and IL18-mediated inflammation. However, it can also have a positive effect in the inflammatory pathway, acting as an innate immune sensor that triggers PYCARD/ASC specks formation, caspase-1 activation, and IL1B and IL18 production. Together with AIM2, also acts as a mediator of pyroptosis, necroptosis and apoptosis (PANoptosis), an integral part of host defense against pathogens, in response to bacterial infection. It is required for PSTPIP1-induced PYCARD/ASC oligomerization and inflammasome formation. Recruits PSTPIP1 to inflammasomes, and is required for PSTPIP1 oligomerization. The polypeptide is Pyrin (Homo sapiens (Human)).